The primary structure comprises 876 residues: Alanine--tRNA ligase (876 aa).

The Zn(2+) site is built by histidine 564, histidine 568, cysteine 666, and histidine 670.

The protein belongs to the class-II aminoacyl-tRNA synthetase family. As to quaternary structure, homotetramer. It depends on Zn(2+) as a cofactor.

It is found in the cytoplasm. It carries out the reaction tRNA(Ala) + L-alanine + ATP = L-alanyl-tRNA(Ala) + AMP + diphosphate. In terms of biological role, catalyzes the attachment of alanine to tRNA(Ala) in a two-step reaction: alanine is first activated by ATP to form Ala-AMP and then transferred to the acceptor end of tRNA(Ala). Also edits incorrectly charged Ser-tRNA(Ala) and Gly-tRNA(Ala) via its editing domain. The chain is Alanine--tRNA ligase from Salmonella paratyphi B (strain ATCC BAA-1250 / SPB7).